The chain runs to 773 residues: ATP-dependent RNA helicase MAK5 (773 aa).

The span at 73 to 82 (KDSNKEKVGD) shows a compositional bias: basic and acidic residues. 2 disordered regions span residues 73–99 (KDSNKEKVGDDQESVENESGSDSESEL) and 114–144 (SAASYSSSDEDEQGNIESSKLTDPSEDVDED). Acidic residues predominate over residues 83–99 (DQESVENESGSDSESEL). Threonine 135 is subject to Phosphothreonine. Serine 138 is modified (phosphoserine). The Q motif motif lies at 171–199 (EWTNLAPLSMTILQSLQNLNFLRPTEIQK). The Helicase ATP-binding domain occupies 202 to 399 (IPVIMQGVDV…SSSRQVKDRR (198 aa)). 215 to 222 (ASTGSGKT) contributes to the ATP binding site. A DEAD box motif is present at residues 333 to 336 (DEAD). Positions 452–615 (DLYCYYFLTM…STDLNSRSTN (164 aa)) constitute a Helicase C-terminal domain. A Phosphoserine modification is found at serine 678.

It belongs to the DEAD box helicase family. DDX24/MAK5 subfamily.

Its subcellular location is the nucleus. It is found in the nucleolus. The catalysed reaction is ATP + H2O = ADP + phosphate + H(+). Functionally, ATP-binding RNA helicase involved in the biogenesis of 60S ribosomal subunits and is required for the normal formation of 25S and 5.8S rRNAs. Required for the maintenance of dsRNA killer plasmid. The chain is ATP-dependent RNA helicase MAK5 (MAK5) from Saccharomyces cerevisiae (strain ATCC 204508 / S288c) (Baker's yeast).